We begin with the raw amino-acid sequence, 380 residues long: Alpha-N-acetylneuraminate alpha-2,8-sialyltransferase ST8SIA3 (380 aa).

The Cytoplasmic portion of the chain corresponds to 1 to 9; the sequence is MRNCKMARV. A helical; Signal-anchor for type II membrane protein membrane pass occupies residues 10–33; sequence ASVLGLVMLSVALLILSLISYVSL. The Lumenal segment spans residues 34-380; that stretch reads KKENIFTTPK…LTKLTLSHCA (347 aa). N93, N113, and N160 each carry an N-linked (GlcNAc...) asparagine glycan. Intrachain disulfides connect C162–C313 and C176–C379. CMP-N-acetyl-beta-neuraminate is bound by residues N167 and N190. N-linked (GlcNAc...) asparagine glycosylation occurs at N206. Residues S300, T301, G302, W322, Y336, and H337 each coordinate CMP-N-acetyl-beta-neuraminate. Residue H354 is the Proton donor/acceptor of the active site.

It belongs to the glycosyltransferase 29 family. In terms of assembly, homodimer. Autopolysialylated. In terms of tissue distribution, expressed in fetal and adult brain and fetal liver.

It is found in the golgi apparatus membrane. It catalyses the reaction [N-acetyl-alpha-D-neuraminosyl-(2-&gt;8)](n) + CMP-N-acetyl-beta-neuraminate = [N-acetyl-alpha-D-neuraminosyl-(2-&gt;8)](n+1) + CMP + H(+). The catalysed reaction is alpha-Neu5Ac-(2-&gt;3)-beta-D-Gal-(1-&gt;4)-6S-D-GlcNAc + CMP-N-acetyl-beta-neuraminate = alpha-Neu5Ac-(2-&gt;8)-alpha-Neu5Ac-(2-&gt;3)-beta-D-Gal-(1-&gt;4)-6S-D-GlcNAc + CMP + H(+). The enzyme catalyses a ganglioside GM3 (d18:1(4E)) + CMP-N-acetyl-beta-neuraminate = a ganglioside GD3 (d18:1(4E)) + CMP + H(+). It carries out the reaction a ganglioside GM3 + CMP-N-acetyl-beta-neuraminate = a ganglioside GD3 + CMP + H(+). It catalyses the reaction an N-acetyl-alpha-neuraminyl-(2-&gt;3)-beta-D-galactosyl derivative + CMP-N-acetyl-beta-neuraminate = an N-acetyl-alpha-neuraminyl-(2-&gt;8)-N-acetyl-alpha-neuraminyl-(2-&gt;3)-beta-D-galactosyl derivative + CMP + H(+). The catalysed reaction is an N-acetyl-alpha-neuraminyl-(2-&gt;3)-beta-D-galactosyl-(1-&gt;4)-N-acetyl-beta-D-glucosaminyl derivative + CMP-N-acetyl-beta-neuraminate = an alpha-Neu5Ac-(2-&gt;8)-alpha-Neu5Ac-(2-&gt;3)-beta-D-Gal-(1-&gt;4)-beta-D-GlcNAc derivative + CMP + H(+). The protein operates within protein modification; protein glycosylation. Catalyzes the transfer of sialic acid from a CMP-linked sialic acid donor onto a terminal alpha-2,3-, alpha-2,6-, or alpha-2,8-linked sialic acid of an acceptor, such as N-linked oligosaccharides of glycoproteins and glycolipids through alpha-2,8-linkages. Forms oligosialic and polysialic acid on various sialylated N-acetyllactosamine oligosaccharides of glycoproteins, including FETUB N-glycans, a2-HS-glycoprotein (AHSG) and alpha 2,3-sialylated glycosphingolipids, such as alpha 2,3-sialylparagloboside and ganglioside GM3 and to a lesser extent NCAM1 N-glycans. However, it is much more specific to N-linked oligosaccharides of glycoproteins than glycosphingolipids. 2,3-sialylparagloboside serves as the best acceptor substrate among the glycolipids. alpha-Neu5Ac-(2-&gt;8)-alpha-Neu5Ac-(2-&gt;3)-beta-D-Gal-(1-&gt;4)-6S-D-GlcNAc and monosialyl and disialyl N-acetyllactosamines are the best acceptor substrates among glycoproteins. May plays critical role in the striatum by mediating the formation of disialylated and trisialylated terminal glycotopes on N- and O-glycans of specific striatal proteins, regulating their distribution in lipid rafts, affecting their interaction with other binding partners, and subsequently modulating striatal functions. This Homo sapiens (Human) protein is Alpha-N-acetylneuraminate alpha-2,8-sialyltransferase ST8SIA3.